The chain runs to 419 residues: Peptide chain release factor subunit 1 (419 aa).

Belongs to the eukaryotic release factor 1 family. As to quaternary structure, heterodimer of two subunits, one of which binds GTP.

It is found in the cytoplasm. In terms of biological role, directs the termination of nascent peptide synthesis (translation) in response to the termination codons UAA, UAG and UGA. The chain is Peptide chain release factor subunit 1 from Methanococcus maripaludis (strain C5 / ATCC BAA-1333).